The following is a 34-amino-acid chain: MSDINATRLPAWLVDCPCVGDDVNRLLTRGESLC.

A propeptide spanning residues 1 to 10 (MSDINATRLP) is cleaved from the precursor. Residues 11 to 17 (AWLVDCP) constitute a cross-link (cyclopeptide (Ala-Pro)). Positions 12–16 (WLVDC) form a cross-link, 2'-cysteinyl-6'-hydroxytryptophan sulfoxide (Trp-Cys). The propeptide occupies 18–34 (CVGDDVNRLLTRGESLC).

This sequence belongs to the MSDIN fungal toxin family. Processed by the macrocyclase-peptidase enzyme POPB to yield a toxic cyclic heptapeptide. POPB first removes 10 residues from the N-terminus. Conformational trapping of the remaining peptide forces the enzyme to release this intermediate rather than proceed to macrocyclization. The enzyme rebinds the remaining peptide in a different conformation and catalyzes macrocyclization of the N-terminal 7 residues.

Its function is as follows. Major toxin that belongs to the bicyclic heptapeptides called phallotoxins. Although structurally related to amatoxins, phallotoxins have a different mode of action, which is the stabilization of F-actin. Phallotoxins are poisonous when administered parenterally, but not orally because of poor absorption. In Amanita bisporigera (Destroying angel), this protein is Phallacidin proprotein 1.